The primary structure comprises 805 residues: Angiotensin-converting enzyme 2 (805 aa).

Positions 1–17 (MSSSSWLLLSLVAVTAA) are cleaved as a signal peptide. Topologically, residues 18–740 (QSTIEEQAKT…LGPPNQPPVS (723 aa)) are extracellular. In terms of domain architecture, Peptidase M2 spans 19–607 (STIEEQAKTF…QNKNSFVGWS (589 aa)). Residues 30-41 (DKFNHEAEDLFY) are interaction with SARS-CoV spike glycoprotein. Residue Asn53 is glycosylated (N-linked (GlcNAc...) asparagine). The interval 82-84 (MYP) is interaction with SARS-CoV spike glycoprotein. N-linked (GlcNAc...) asparagine glycans are attached at residues Asn90 and Asn103. A disulfide bond links Cys133 and Cys141. Position 169 (Arg169) interacts with chloride. Residue Arg273 participates in substrate binding. Residue Asn322 is glycosylated (N-linked (GlcNAc...) asparagine). A disulfide bond links Cys344 and Cys361. Residue 345-346 (HP) participates in substrate binding. Residues 353–357 (KGDFR) form an interaction with SARS-CoV spike glycoprotein region. Residue His374 coordinates Zn(2+). Glu375 acts as the Proton acceptor in catalysis. Zn(2+)-binding residues include His378 and Glu402. Residue Asn432 is glycosylated (N-linked (GlcNAc...) asparagine). Positions 477 and 481 each coordinate chloride. Catalysis depends on His505, which acts as the Proton donor. Residue Tyr515 coordinates substrate. An intrachain disulfide couples Cys530 to Cys542. N-linked (GlcNAc...) asparagine glycosylation occurs at Asn546. A Collectrin-like domain is found at 614 to 805 (ADQSIKVRIS…QNTDDVQTSF (192 aa)). Positions 652–659 (RQYFLKVK) are essential for cleavage by ADAM17. The N-linked (GlcNAc...) asparagine glycan is linked to Asn690. An essential for cleavage by TMPRSS11D and TMPRSS2 region spans residues 697-716 (RTEVEKAIRMSRSRINDAFR). A helical membrane pass occupies residues 741–761 (IWLIVFGVVMGVIVVGIVILI). Topologically, residues 762–805 (FTGIRDRKKKNKARSGENPYASIDISKGENNPGFQNTDDVQTSF) are cytoplasmic. A disordered region spans residues 772-805 (NKARSGENPYASIDISKGENNPGFQNTDDVQTSF). The LIR signature appears at 778 to 786 (ENPYASIDI). Tyr781 is modified (phosphotyrosine). An Endocytic sorting signal motif is present at residues 781 to 784 (YASI). The SH2-binding motif lies at 781 to 785 (YASID). Ser783 carries the post-translational modification Phosphoserine. A Glycyl lysine isopeptide (Lys-Gly) (interchain with G-Cter in ubiquitin) cross-link involves residue Lys788. Residues 789 to 805 (GENNPGFQNTDDVQTSF) show a composition bias toward polar residues. Residues 792–795 (NPGF) carry the PTB motif. Residues 803 to 805 (TSF) carry the PDZ-binding motif.

The protein belongs to the peptidase M2 family. In terms of assembly, homodimer. Interacts with the catalytically active form of TMPRSS2. Interacts with SLC6A19; this interaction is essential for expression and function of SLC6A19 in intestine. Interacts with ITGA5:ITGB1. Probably interacts (via endocytic sorting signal motif) with AP2M1; the interaction is inhibited by phosphorylation of Tyr-781. Interacts (via PDZ-binding motif) with NHERF1 (via PDZ domains); the interaction may enhance ACE2 membrane residence. As to quaternary structure, (Microbial infection) Interacts with SARS coronavirus/SARS-CoV spike protein. (Microbial infection) Interacts with SARS coronavirus-2/SARS-CoV-2 spike protein (via RBD domain). In terms of assembly, (Microbial infection) Interacts with human coronavirus NL63 spike protein. As to quaternary structure, (Microbial infection) Interacts with human coronavirus NL63/HCoV-NL63 spike glycoprotein. (Microbial infection) Interacts with SARS coronavirus-2/SARS-CoV-2 spike protein; the interaction is increased by AVP/Arg-vasopressin with which they may form a complex. It depends on Zn(2+) as a cofactor. Chloride is required as a cofactor. In terms of processing, N-glycosylation on Asn-90 may limit SARS infectivity. Post-translationally, proteolytic cleavage by ADAM17 generates a secreted form. Also cleaved by serine proteases: TMPRSS2, TMPRSS11D and HPN/TMPRSS1. Phosphorylated. Phosphorylation at Tyr-781 probably inhibits interaction with AP2M1 and enables interactions with proteins containing SH2 domains. In terms of processing, ubiquitinated. Ubiquitinated on Lys-788 via 'Lys-48'-linked ubiquitin. 'Lys-48'-linked deubiquitinated by USP50 on the Lys-788; leading to its stabilization. In terms of tissue distribution, expressed in endothelial cells from small and large arteries, and in arterial smooth muscle cells (at protein level). Expressed in enterocytes of the small intestine, Leydig cells and Sertoli cells (at protein level). Expressed in the renal proximal tubule and the small intestine (at protein level). Expressed in heart, kidney, testis, and gastrointestinal system (at protein level). In lung, expressed at low levels in some alveolar type 2 cells, the expression seems to be individual-specific (at protein level). Expressed in nasal epithelial cells (at protein level). Coexpressed with TMPRSS2 within some lung alveolar type 2 cells, ileal absorptive enterocytes, intestinal epithelial cells, cornea, gallbladder and nasal goblet secretory cells. Coexpressed with TMPRSS4 within mature enterocytes. As to expression, expressed in nasal and bronchial epithelial cells (at protein level).

The protein resides in the secreted. Its subcellular location is the cell membrane. The protein localises to the cytoplasm. It is found in the cell projection. It localises to the cilium. The protein resides in the apical cell membrane. It carries out the reaction angiotensin II + H2O = angiotensin-(1-7) + L-phenylalanine. The enzyme catalyses angiotensin I + H2O = angiotensin-(1-9) + L-leucine. It catalyses the reaction bradykinin(1-8) + H2O = bradykinin(1-7) + L-phenylalanine. The catalysed reaction is neurotensin + H2O = neurotensin-(1-12) + L-leucine. It carries out the reaction neurotensin-(1-8) + H2O = neurotensin-(1-7) + L-arginine. The enzyme catalyses kinetensin + H2O = kinetensin-(1-8) + L-leucine. It catalyses the reaction dynorphin A-(1-13) + H2O = dynorphin A-(1-12) + L-lysine. The catalysed reaction is apelin-13 + H2O = apelin-12 + L-phenylalanine. It carries out the reaction [Pyr1]apelin-13 + H2O = [Pyr1]apelin-12 + L-phenylalanine. The enzyme catalyses apelin-17 + H2O = apelin-16 + L-phenylalanine. It catalyses the reaction beta-casomorphin-7 + H2O = beta-casomorphin-6 + L-isoleucine. The catalysed reaction is neocasomorphin + H2O = neocasomorphin-(1-5) + L-isoleucine. Regulated by chloride and fluoride, but not bromide. Chloride increases angiotensin I and decreases angiotensin II cleavage. Inhibited by MLN-4760, cFP_Leu, and EDTA, but not by the ACE inhibitors lisinopril, captopril and enalaprilat. Highly potent and selective in vitro ACE2 inhibitors were identified. Essential counter-regulatory carboxypeptidase of the renin-angiotensin hormone system that is a critical regulator of blood volume, systemic vascular resistance, and thus cardiovascular homeostasis. Converts angiotensin I to angiotensin 1-9, a nine-amino acid peptide with anti-hypertrophic effects in cardiomyocytes, and angiotensin II to angiotensin 1-7, which then acts as a beneficial vasodilator and anti-proliferation agent, counterbalancing the actions of the vasoconstrictor angiotensin II. Also removes the C-terminal residue from three other vasoactive peptides, neurotensin, kinetensin, and des-Arg bradykinin, but is not active on bradykinin. Also cleaves other biological peptides, such as apelins (apelin-13, [Pyr1]apelin-13, apelin-17, apelin-36), casomorphins (beta-casomorphin-7, neocasomorphin) and dynorphin A with high efficiency. In addition, ACE2 C-terminus is homologous to collectrin and is responsible for the trafficking of the neutral amino acid transporter SL6A19 to the plasma membrane of gut epithelial cells via direct interaction, regulating its expression on the cell surface and its catalytic activity. Functionally, (Microbial infection) Acts as a receptor for human coronaviruses SARS-CoV and SARS-CoV-2, as well as human coronavirus NL63/HCoV-NL63. Its function is as follows. Non-functional as a carboxypeptidase. In terms of biological role, (Microbial infection) Non-functional as a receptor for human coronavirus SARS-CoV-2. This chain is Angiotensin-converting enzyme 2, found in Homo sapiens (Human).